Consider the following 464-residue polypeptide: Mitogen-activated protein kinase 10 (464 aa).

The Protein kinase domain maps to 64–359; it reads YQNLKPIGSG…VDDALQHPYI (296 aa). Residues 70 to 78 and Lys93 each bind ATP; that span reads IGSGAQGIV. Catalysis depends on Asp189, which acts as the Proton acceptor. The residue at position 221 (Thr221) is a Phosphothreonine; by MAP2K7. A TXY motif is present at residues 221 to 223; that stretch reads TPY. Tyr223 bears the Phosphotyrosine; by MAP2K4 mark. Residues 405–464 are disordered; the sequence is TKNGVVKGQPSPSGAAVNSSESLPPSSSVNDISSMSTDQTLASDTDSSLEASAGPLGCCR. Low complexity predominate over residues 423-432; that stretch reads SSESLPPSSS. The span at 433 to 454 shows a compositional bias: polar residues; the sequence is VNDISSMSTDQTLASDTDSSLE. 2 S-palmitoyl cysteine lipidation sites follow: Cys462 and Cys463.

The protein belongs to the protein kinase superfamily. CMGC Ser/Thr protein kinase family. MAP kinase subfamily. Interacts with MAPK8IP1/JIP-1 and MAPK8IP3/JIP-3/JSAP1. Interacts with SPAG9/MAPK8IP4/JIP4. Interacts with HDAC9 and MAPKBP1. Interacts with ARRB2; the interaction enhances MAPK10 activation by MAP3K5. Interacts with SARM1. Interacts with JUND; interaction is inhibited in the presence of MEN1. Requires Mg(2+) as cofactor. Post-translationally, dually phosphorylated on Thr-221 and Tyr-223 by MAP2K4 and MAP2K7, which activates the enzyme. MAP2K7 shows a strong preference for Thr-221 while MAP2K4 phosphorylates Tyr-223 preferentially. Weakly autophosphorylated on threonine and tyrosine residues in vitro. In terms of processing, palmitoylation regulates subcellular location and axonal development.

Its subcellular location is the cytoplasm. It localises to the membrane. The protein resides in the nucleus. It is found in the mitochondrion. The enzyme catalyses L-seryl-[protein] + ATP = O-phospho-L-seryl-[protein] + ADP + H(+). The catalysed reaction is L-threonyl-[protein] + ATP = O-phospho-L-threonyl-[protein] + ADP + H(+). Its activity is regulated as follows. Activated by threonine and tyrosine phosphorylation by two dual specificity kinases, MAP2K4 and MAP2K7. MAP2K7 phosphorylates MAPK10 on Thr-221 causing a conformational change and a large increase in Vmax for the enzyme. MAP2K4 then phosphorylates Tyr-223 resulting in a further increase in Vmax. Inhibited by dual specificity phosphatases, such as DUSP1. Inhibited by HDAC9. In terms of biological role, serine/threonine-protein kinase involved in various processes such as neuronal proliferation, differentiation, migration and programmed cell death. Extracellular stimuli such as pro-inflammatory cytokines or physical stress stimulate the stress-activated protein kinase/c-Jun N-terminal kinase (SAP/JNK) signaling pathway. In this cascade, two dual specificity kinases MAP2K4/MKK4 and MAP2K7/MKK7 phosphorylate and activate MAPK10/JNK3. In turn, MAPK10/JNK3 phosphorylates a number of transcription factors, primarily components of AP-1 such as JUN and ATF2 and thus regulates AP-1 transcriptional activity. Plays regulatory roles in the signaling pathways during neuronal apoptosis. Phosphorylates the neuronal microtubule regulator STMN2. Acts in the regulation of the amyloid-beta precursor protein/APP signaling during neuronal differentiation by phosphorylating APP. Also participates in neurite growth in spiral ganglion neurons. Phosphorylates the CLOCK-BMAL1 heterodimer and plays a role in the photic regulation of the circadian clock. Phosphorylates JUND and this phosphorylation is inhibited in the presence of MEN1. This is Mitogen-activated protein kinase 10 (Mapk10) from Rattus norvegicus (Rat).